The chain runs to 406 residues: Tyrosine--tRNA ligase (406 aa).

Tyr-35 is an L-tyrosine binding site. Residues Ala-40–His-49 carry the 'HIGH' region motif. Residues Tyr-166 and Gln-170 each coordinate L-tyrosine. The 'KMSKS' region signature appears at Lys-226–Ser-230. Lys-229 contributes to the ATP binding site. In terms of domain architecture, S4 RNA-binding spans Ile-341 to Ile-405.

Belongs to the class-I aminoacyl-tRNA synthetase family. TyrS type 1 subfamily. Homodimer.

The protein resides in the cytoplasm. The enzyme catalyses tRNA(Tyr) + L-tyrosine + ATP = L-tyrosyl-tRNA(Tyr) + AMP + diphosphate + H(+). Its function is as follows. Catalyzes the attachment of tyrosine to tRNA(Tyr) in a two-step reaction: tyrosine is first activated by ATP to form Tyr-AMP and then transferred to the acceptor end of tRNA(Tyr). The sequence is that of Tyrosine--tRNA ligase from Borrelia hermsii (strain HS1 / DAH).